A 279-amino-acid chain; its full sequence is Protein PHOTOPERIODIC CONTROL OF HYPOCOTYL 1-LIKE (279 aa).

In terms of assembly, interacts with light-activated phyB. Binds directly to PIF1 and COP1. Ubiquitinated by COP1 in darkness; this leads to proteasomal degradation. In terms of tissue distribution, mainly expressed in cotyledons, hypocotyls, leaves.

Its subcellular location is the nucleus. Functionally, together with PCH1, regulates growth and development adaptation to the ambient environment by controlling negatively phytochrome B (phyB) dark reversion, a temperature-dependent thermal relaxation process during which phyB reverts from the active to the inactive state. Contributes to red (R) light-triggered photomorphogenesis. Promotes various light responses such as seed germination, hypocotyl gravitropism and chlorophyll biosynthesis, via direct interaction with PIF1 and COP1. Prevents DNA-binding ability of PIF1 to negatively regulate the expressions of its target genes. Facilitates the physical interaction between phyB and PIF1 and the subsequent light-induced degradation of PIF1. The sequence is that of Protein PHOTOPERIODIC CONTROL OF HYPOCOTYL 1-LIKE from Arabidopsis thaliana (Mouse-ear cress).